A 218-amino-acid chain; its full sequence is 3-isopropylmalate dehydratase small subunit (218 aa).

This sequence belongs to the LeuD family. LeuD type 1 subfamily. In terms of assembly, heterodimer of LeuC and LeuD.

The catalysed reaction is (2R,3S)-3-isopropylmalate = (2S)-2-isopropylmalate. The protein operates within amino-acid biosynthesis; L-leucine biosynthesis; L-leucine from 3-methyl-2-oxobutanoate: step 2/4. Functionally, catalyzes the isomerization between 2-isopropylmalate and 3-isopropylmalate, via the formation of 2-isopropylmaleate. The polypeptide is 3-isopropylmalate dehydratase small subunit (Alkalilimnicola ehrlichii (strain ATCC BAA-1101 / DSM 17681 / MLHE-1)).